The chain runs to 396 residues: Polygalacturonase (396 aa).

The N-terminal stretch at Met1 to Ser22 is a signal peptide. 6 N-linked (GlcNAc...) asparagine glycosylation sites follow: Asn143, Asn151, Asn174, Asn181, Asn203, and Asn208. 2 PbH1 repeats span residues Cys172–Arg198 and Ser199–Asp220. The active-site Proton donor is Asp213. Cys215 and Cys232 form a disulfide bridge. The active site involves His236. PbH1 repeat units lie at residues Val252 to Thr273, Val282 to Gln303, and Pro316 to Asp356. N-linked (GlcNAc...) asparagine glycans are attached at residues Asn259 and Asn294. The tract at residues Lys364 to Ser396 is disordered. A disulfide bond links Cys372 and Cys388.

It belongs to the glycosyl hydrolase 28 family. In terms of tissue distribution, pollen.

It is found in the secreted. Its subcellular location is the cell wall. It catalyses the reaction (1,4-alpha-D-galacturonosyl)n+m + H2O = (1,4-alpha-D-galacturonosyl)n + (1,4-alpha-D-galacturonosyl)m.. In terms of biological role, may function in depolymerizing pectin during pollen development, germination, and tube growth. This Nicotiana tabacum (Common tobacco) protein is Polygalacturonase (PG1).